Consider the following 368-residue polypeptide: Probable deoxyhypusine synthase (368 aa).

Residues 100–104 (SNLVS), 126–128 (TAG), Glu-132, and Asp-233 each bind NAD(+). 131 to 132 (EE) is a binding site for spermidine. Asp-238 contributes to the spermidine binding site. Residue Gly-278 participates in NAD(+) binding. His-283 serves as a coordination point for spermidine. NAD(+) is bound at residue 303–304 (TA). Spermidine contacts are provided by residues 309–311 (GSD) and 318–324 (EAISWGK). The Nucleophile role is filled by Lys-324. NAD(+) is bound at residue 337–338 (EA).

This sequence belongs to the deoxyhypusine synthase family. NAD(+) is required as a cofactor.

The enzyme catalyses [eIF5A protein]-L-lysine + spermidine = [eIF5A protein]-deoxyhypusine + propane-1,3-diamine. The protein operates within protein modification; eIF5A hypusination. Functionally, catalyzes the NAD-dependent oxidative cleavage of spermidine and the subsequent transfer of the butylamine moiety of spermidine to the epsilon-amino group of a specific lysine residue of the eIF-5A precursor protein to form the intermediate deoxyhypusine residue. In Drosophila melanogaster (Fruit fly), this protein is Probable deoxyhypusine synthase.